The following is a 553-amino-acid chain: Urocanate hydratase (553 aa).

Residues 45 to 46 (GG), glutamine 123, 169 to 171 (GMG), aspartate 189, arginine 194, 235 to 236 (NA), 256 to 260 (QTSAH), 266 to 267 (YV), tyrosine 315, and glycine 485 contribute to the NAD(+) site.

Belongs to the urocanase family. NAD(+) is required as a cofactor.

The protein localises to the cytoplasm. The enzyme catalyses 4-imidazolone-5-propanoate = trans-urocanate + H2O. It functions in the pathway amino-acid degradation; L-histidine degradation into L-glutamate; N-formimidoyl-L-glutamate from L-histidine: step 2/3. Catalyzes the conversion of urocanate to 4-imidazolone-5-propionate. In Staphylococcus saprophyticus subsp. saprophyticus (strain ATCC 15305 / DSM 20229 / NCIMB 8711 / NCTC 7292 / S-41), this protein is Urocanate hydratase.